A 152-amino-acid chain; its full sequence is Ribosome maturation factor RimP (152 aa).

This sequence belongs to the RimP family.

It localises to the cytoplasm. In terms of biological role, required for maturation of 30S ribosomal subunits. The sequence is that of Ribosome maturation factor RimP from Alkaliphilus metalliredigens (strain QYMF).